Here is a 263-residue protein sequence, read N- to C-terminus: uncharacterized protein (263 aa).

An ATP-binding site is contributed by 31 to 38; the sequence is GPTGSGKT.

This sequence belongs to the CbbQ/NirQ/NorQ/GpvN family.

This is an uncharacterized protein from Staphylococcus epidermidis (strain ATCC 35984 / DSM 28319 / BCRC 17069 / CCUG 31568 / BM 3577 / RP62A).